Here is a 1374-residue protein sequence, read N- to C-terminus: DNA-directed RNA polymerase subunit beta (1374 aa).

The protein belongs to the RNA polymerase beta chain family. In terms of assembly, the RNAP catalytic core consists of 2 alpha, 1 beta, 1 beta' and 1 omega subunit. When a sigma factor is associated with the core the holoenzyme is formed, which can initiate transcription.

It catalyses the reaction RNA(n) + a ribonucleoside 5'-triphosphate = RNA(n+1) + diphosphate. Its function is as follows. DNA-dependent RNA polymerase catalyzes the transcription of DNA into RNA using the four ribonucleoside triphosphates as substrates. The protein is DNA-directed RNA polymerase subunit beta of Rickettsia prowazekii (strain Madrid E).